The chain runs to 453 residues: Prenyltransferase nscD (453 aa).

Positions 118, 200, 202, 271, 273, and 428 each coordinate dimethylallyl diphosphate.

This sequence belongs to the tryptophan dimethylallyltransferase family.

Its pathway is secondary metabolite biosynthesis. Its function is as follows. Prenyltransferase; part of the gene cluster that mediates the biosynthesis of neosartoricin, a prenylated anthracenone that exhibits T-cell antiproliferative activity, suggestive of a physiological role as an immunosuppressive agent. The non-reducing polyketide synthase nscA probably synthesizes and cyclizes the decaketide backbone. The hydrolase nscB then mediates the product release through hydrolysis followed by spontaneous decarboxylation. The prenyltransferase nscD catalyzes the addition of the dimethylallyl group to the aromatic C5. The FAD-dependent monooxygenase nscC is then responsible for the stereospecific hydroxylation at C2. There is no gene encoding O-acetyltransferase in the nsc gene cluster; thus, the last step of 2-O-acetylation leading to neosartoricin may be catalyzed by an unidentified O-acetyltransferase. The sequence is that of Prenyltransferase nscD from Aspergillus fumigatus (strain ATCC MYA-4609 / CBS 101355 / FGSC A1100 / Af293) (Neosartorya fumigata).